Here is a 310-residue protein sequence, read N- to C-terminus: Putative integrase/recombinase y4rE (310 aa).

The 78-residue stretch at 6-83 folds into the Core-binding (CB) domain; it reads RFLGEKVERY…VLRRFYEYLA (78 aa). The Tyr recombinase domain maps to 104-301; it reads PPPRILSEAE…SVDLLAMAAE (198 aa). Active-site residues include Arg-148, Lys-173, His-245, Arg-248, and His-279. Residue Tyr-288 is the O-(3'-phospho-DNA)-tyrosine intermediate of the active site.

This sequence belongs to the 'phage' integrase family.

The polypeptide is Putative integrase/recombinase y4rE (Sinorhizobium fredii (strain NBRC 101917 / NGR234)).